The following is a 1444-amino-acid chain: DNA polymerase III PolC-type (1444 aa).

An Exonuclease domain is found at 428–584 (YCVFDVETTG…FDAEATAYLA (157 aa)).

The protein belongs to the DNA polymerase type-C family. PolC subfamily.

It is found in the cytoplasm. The enzyme catalyses DNA(n) + a 2'-deoxyribonucleoside 5'-triphosphate = DNA(n+1) + diphosphate. Its function is as follows. Required for replicative DNA synthesis. This DNA polymerase also exhibits 3' to 5' exonuclease activity. The sequence is that of DNA polymerase III PolC-type from Listeria monocytogenes serovar 1/2a (strain ATCC BAA-679 / EGD-e).